Reading from the N-terminus, the 131-residue chain is D-ribose pyranase (131 aa).

His-20 serves as the catalytic Proton donor. Substrate contacts are provided by residues Asp-28, His-98, and 120-122; that span reads YAN.

Belongs to the RbsD / FucU family. RbsD subfamily. As to quaternary structure, homodecamer.

The protein resides in the cytoplasm. The catalysed reaction is beta-D-ribopyranose = beta-D-ribofuranose. Its pathway is carbohydrate metabolism; D-ribose degradation; D-ribose 5-phosphate from beta-D-ribopyranose: step 1/2. Catalyzes the interconversion of beta-pyran and beta-furan forms of D-ribose. The chain is D-ribose pyranase from Bacillus cereus (strain AH187).